The sequence spans 284 residues: Undecaprenyl-diphosphatase 2 (284 aa).

Helical transmembrane passes span 6 to 26, 46 to 66, 94 to 114, 119 to 139, 183 to 203, 227 to 247, and 262 to 282; these read VIFI…EFIP, FAEM…VVLY, FGMN…LFYD, LFNL…LLVV, IMGG…SFFL, TLWI…IIVM, and FAVY…TNII.

The protein belongs to the UppP family.

Its subcellular location is the cell membrane. The enzyme catalyses di-trans,octa-cis-undecaprenyl diphosphate + H2O = di-trans,octa-cis-undecaprenyl phosphate + phosphate + H(+). Catalyzes the dephosphorylation of undecaprenyl diphosphate (UPP). Confers resistance to bacitracin. The polypeptide is Undecaprenyl-diphosphatase 2 (Clostridioides difficile (strain 630) (Peptoclostridium difficile)).